Consider the following 180-residue polypeptide: GTP cyclohydrolase 1 (180 aa).

Zn(2+) contacts are provided by cysteine 71, histidine 74, and cysteine 142.

Belongs to the GTP cyclohydrolase I family. As to quaternary structure, homomer.

It catalyses the reaction GTP + H2O = 7,8-dihydroneopterin 3'-triphosphate + formate + H(+). It functions in the pathway cofactor biosynthesis; 7,8-dihydroneopterin triphosphate biosynthesis; 7,8-dihydroneopterin triphosphate from GTP: step 1/1. This chain is GTP cyclohydrolase 1, found in Helicobacter pylori (strain P12).